The primary structure comprises 425 residues: Riboflavin biosynthesis protein RibBA (425 aa).

Residues 1-204 (MTRLDSVERA…IADLIEWRRK (204 aa)) form a DHBP synthase region. Residues 28 to 29 (RE), Asp33, 141 to 145 (RPGHT), and Glu165 contribute to the D-ribulose 5-phosphate site. Mg(2+) is bound at residue Glu29. Position 144 (His144) interacts with Mg(2+). The GTP cyclohydrolase II stretch occupies residues 205-425 (HEKHIERVAE…HLPGEFGGAL (221 aa)). 259 to 263 (RVHSE) provides a ligand contact to GTP. Residues Cys264, Cys275, and Cys277 each contribute to the Zn(2+) site. GTP-binding positions include Gln280, 303–305 (EGR), and Thr325. Asp337 functions as the Proton acceptor; for GTP cyclohydrolase activity in the catalytic mechanism. The active-site Nucleophile; for GTP cyclohydrolase activity is the Arg339. Residues Thr360 and Lys365 each contribute to the GTP site.

It in the N-terminal section; belongs to the DHBP synthase family. This sequence in the C-terminal section; belongs to the GTP cyclohydrolase II family. Mg(2+) serves as cofactor. Mn(2+) is required as a cofactor. Requires Zn(2+) as cofactor.

The catalysed reaction is D-ribulose 5-phosphate = (2S)-2-hydroxy-3-oxobutyl phosphate + formate + H(+). The enzyme catalyses GTP + 4 H2O = 2,5-diamino-6-hydroxy-4-(5-phosphoribosylamino)-pyrimidine + formate + 2 phosphate + 3 H(+). Its pathway is cofactor biosynthesis; riboflavin biosynthesis; 2-hydroxy-3-oxobutyl phosphate from D-ribulose 5-phosphate: step 1/1. The protein operates within cofactor biosynthesis; riboflavin biosynthesis; 5-amino-6-(D-ribitylamino)uracil from GTP: step 1/4. Its function is as follows. Catalyzes the conversion of D-ribulose 5-phosphate to formate and 3,4-dihydroxy-2-butanone 4-phosphate. In terms of biological role, catalyzes the conversion of GTP to 2,5-diamino-6-ribosylamino-4(3H)-pyrimidinone 5'-phosphate (DARP), formate and pyrophosphate. This Mycobacterium marinum (strain ATCC BAA-535 / M) protein is Riboflavin biosynthesis protein RibBA.